A 231-amino-acid polypeptide reads, in one-letter code: GDSL lipase Rv0518 (231 aa).

Residues 1-20 form the signal peptide; it reads MSRPGTYVIGLTLLVGLVVG. Residue S46 is the Nucleophile of the active site. The active-site Proton donor is the D205. The Proton acceptor role is filled by H208.

The protein belongs to the 'GDSL' lipolytic enzyme family.

It is found in the secreted. It localises to the cell wall. The protein localises to the extracellular space. It catalyses the reaction a fatty acid ester + H2O = an aliphatic alcohol + a fatty acid + H(+). It carries out the reaction decanoate ester + H2O = decanoate + an aliphatic alcohol + H(+). The enzyme catalyses an octanoate ester + H2O = an aliphatic alcohol + octanoate + H(+). The catalysed reaction is a dodecanoate ester + H2O = an aliphatic alcohol + dodecanoate + H(+). It catalyses the reaction a tetradecanoate ester + H2O = an aliphatic alcohol + tetradecanoate + H(+). Activity is inhibited by the serine modifier phenylmethylsulfonyl fluoride (PMSF). Its function is as follows. GDSL lipase that catalyzes the hydrolysis of p-nitrophenyl (pNP) esters. pNP-decanoate (C10) is the preferred substrate. It can also use pNP-octanoate (C8), pNP-dodecanoate (C12) and pNP-tetradecanoate (C14). Has lower activity with pNP-butyrate (C4), pNP-palmitate (C16) and pNP-stearate (C18). Does not show phospholipase A1 activity. Might help bacteria to utilize available lipids for its growth as well as provide resistance to various intracellular stresses by cell wall modulation resulting in enhanced intracellular survival. This chain is GDSL lipase Rv0518, found in Mycobacterium tuberculosis (strain ATCC 25618 / H37Rv).